A 523-amino-acid polypeptide reads, in one-letter code: Glutamate--cysteine ligase (523 aa).

The protein belongs to the glutamate--cysteine ligase type 1 family. Type 1 subfamily.

It catalyses the reaction L-cysteine + L-glutamate + ATP = gamma-L-glutamyl-L-cysteine + ADP + phosphate + H(+). Its pathway is sulfur metabolism; glutathione biosynthesis; glutathione from L-cysteine and L-glutamate: step 1/2. The protein is Glutamate--cysteine ligase of Shewanella oneidensis (strain ATCC 700550 / JCM 31522 / CIP 106686 / LMG 19005 / NCIMB 14063 / MR-1).